The following is a 304-amino-acid chain: Acetyl-coenzyme A carboxylase carboxyl transferase subunit beta (304 aa).

The 270-residue stretch at 29 to 298 folds into the CoA carboxyltransferase N-terminal domain; the sequence is LWTKCVSCAA…QAYRPSPQAS (270 aa). Positions 33, 36, 52, and 55 each coordinate Zn(2+). A C4-type zinc finger spans residues 33-55; the sequence is CVSCAALHYTKDFQLNLCVCPAC.

The protein belongs to the AccD/PCCB family. In terms of assembly, acetyl-CoA carboxylase is a heterohexamer composed of biotin carboxyl carrier protein (AccB), biotin carboxylase (AccC) and two subunits each of ACCase subunit alpha (AccA) and ACCase subunit beta (AccD). Requires Zn(2+) as cofactor.

The protein localises to the cytoplasm. The catalysed reaction is N(6)-carboxybiotinyl-L-lysyl-[protein] + acetyl-CoA = N(6)-biotinyl-L-lysyl-[protein] + malonyl-CoA. It functions in the pathway lipid metabolism; malonyl-CoA biosynthesis; malonyl-CoA from acetyl-CoA: step 1/1. Functionally, component of the acetyl coenzyme A carboxylase (ACC) complex. Biotin carboxylase (BC) catalyzes the carboxylation of biotin on its carrier protein (BCCP) and then the CO(2) group is transferred by the transcarboxylase to acetyl-CoA to form malonyl-CoA. The polypeptide is Acetyl-coenzyme A carboxylase carboxyl transferase subunit beta (Gloeobacter violaceus (strain ATCC 29082 / PCC 7421)).